The primary structure comprises 513 residues: ATP synthase subunit alpha (513 aa).

Glycine 169–threonine 176 serves as a coordination point for ATP.

It belongs to the ATPase alpha/beta chains family. F-type ATPases have 2 components, CF(1) - the catalytic core - and CF(0) - the membrane proton channel. CF(1) has five subunits: alpha(3), beta(3), gamma(1), delta(1), epsilon(1). CF(0) has three main subunits: a(1), b(2) and c(9-12). The alpha and beta chains form an alternating ring which encloses part of the gamma chain. CF(1) is attached to CF(0) by a central stalk formed by the gamma and epsilon chains, while a peripheral stalk is formed by the delta and b chains.

Its subcellular location is the cell inner membrane. The catalysed reaction is ATP + H2O + 4 H(+)(in) = ADP + phosphate + 5 H(+)(out). Functionally, produces ATP from ADP in the presence of a proton gradient across the membrane. The alpha chain is a regulatory subunit. In Klebsiella pneumoniae subsp. pneumoniae (strain ATCC 700721 / MGH 78578), this protein is ATP synthase subunit alpha.